We begin with the raw amino-acid sequence, 479 residues long: UDP-N-acetylmuramate--L-alanine ligase (479 aa).

Position 127–133 (127–133 (GTHGKTT)) interacts with ATP.

The protein belongs to the MurCDEF family.

The protein resides in the cytoplasm. It catalyses the reaction UDP-N-acetyl-alpha-D-muramate + L-alanine + ATP = UDP-N-acetyl-alpha-D-muramoyl-L-alanine + ADP + phosphate + H(+). It participates in cell wall biogenesis; peptidoglycan biosynthesis. Cell wall formation. The chain is UDP-N-acetylmuramate--L-alanine ligase from Shewanella denitrificans (strain OS217 / ATCC BAA-1090 / DSM 15013).